We begin with the raw amino-acid sequence, 1119 residues long: DISARM protein DrmA (1119 aa).

Positions 73–95 (PESGMEEDVEQQRNSELEQEAEE) are disordered. Positions 813-986 (ELSKYIDPYR…ATPYASRARD (174 aa)) constitute a Helicase C-terminal domain.

Belongs to the helicase family.

The protein resides in the cytoplasm. Functionally, component of antiviral defense system DISARM (defense island system associated with restriction-modification), composed of DrmE, DrmA, DrmB, DrmC and DrmMII. DISARM is probably a multi-gene restriction module, this subunit is probably a helicase. Expression of DISARM in B.subtilis (strain BEST7003) confers resistance to phages Nf, phi29, phi105, phi3T, SPO1, SPR and SPP1. Protection is over 10(7)-fold against phi3T, 10(4)-10(5)-fold against Nf, phi29, phi105 and SPR, 100-fold against SPO1 and 10-fold against SPP1. DISARM does not interfere with phage adsorption, but instead interferes with (phi3T) DNA replication early in its cycle, preventing replication, circularization and lysogeny and probably causes phage DNA degradation (DNA is degraded in SPP1-infected cells). The sequence is that of DISARM protein DrmA from Bacillus paralicheniformis (strain ATCC 9945a / NCIMB 11709 / CD-2).